The primary structure comprises 146 residues: Putative pre-16S rRNA nuclease (146 aa).

Belongs to the YqgF nuclease family.

The protein resides in the cytoplasm. Its function is as follows. Could be a nuclease involved in processing of the 5'-end of pre-16S rRNA. In Mycoplasmopsis pulmonis (strain UAB CTIP) (Mycoplasma pulmonis), this protein is Putative pre-16S rRNA nuclease.